A 333-amino-acid polypeptide reads, in one-letter code: Glycerol-3-phosphate dehydrogenase [NAD(P)+] (333 aa).

NADPH contacts are provided by Phe-19, Arg-40, Arg-41, and Lys-113. Lys-113 and Gly-141 together coordinate sn-glycerol 3-phosphate. NADPH is bound at residue Ala-145. Sn-glycerol 3-phosphate contacts are provided by Lys-196, Asp-249, Ser-259, Arg-260, and Asn-261. The active-site Proton acceptor is Lys-196. NADPH is bound at residue Arg-260. Val-282 and Glu-283 together coordinate NADPH.

It belongs to the NAD-dependent glycerol-3-phosphate dehydrogenase family.

It is found in the cytoplasm. The catalysed reaction is sn-glycerol 3-phosphate + NAD(+) = dihydroxyacetone phosphate + NADH + H(+). It catalyses the reaction sn-glycerol 3-phosphate + NADP(+) = dihydroxyacetone phosphate + NADPH + H(+). It participates in membrane lipid metabolism; glycerophospholipid metabolism. In terms of biological role, catalyzes the reduction of the glycolytic intermediate dihydroxyacetone phosphate (DHAP) to sn-glycerol 3-phosphate (G3P), the key precursor for phospholipid synthesis. This is Glycerol-3-phosphate dehydrogenase [NAD(P)+] from Sinorhizobium fredii (strain NBRC 101917 / NGR234).